The sequence spans 538 residues: Syncytin-2 (538 aa).

Positions 1 to 15 (MGLLLLLLILTPLLA) are cleaved as a signal peptide. At 16 to 478 (AYCHPDFRLL…GWLNWEGTWK (463 aa)) the chain is on the extracellular side. The CXXC signature appears at 43–46 (CWLC). 3 cysteine pairs are disulfide-bonded: Cys-43–Cys-46, Cys-43–Cys-439, and Cys-431–Cys-438. Asn-146, Asn-177, Asn-220, Asn-241, Asn-247, Asn-312, and Asn-332 each carry an N-linked (GlcNAc...) asparagine glycan. A fusion peptide region spans residues 354-374 (LIPLLVGLGIVGSAGTGIAGI). The short motif at 414 to 430 (LQNRRGLDMLTAAQGGI) is the CKS-17 element. A CX6CC motif is present at residues 431 to 439 (CLALDEKCC). The N-linked (GlcNAc...) asparagine glycan is linked to Asn-443. Residues 479-499 (WFSWVLPFTGPLVSLLLLLLF) traverse the membrane as a helical segment. The Cytoplasmic segment spans residues 500–538 (GPCLLNLITQFVSSRLQATKLQMKLNKRVHPRNSQESPF).

The protein belongs to the gamma type-C retroviral envelope protein family. HERV class-I FRD env subfamily. The surface and transmembrane proteins form a heterodimer. They are attached by non-covalent interactions or by a labile interchain disulfide bond. Specific enzymatic cleavages in vivo yield the mature SU and TM proteins. Post-translationally, the CXXC motif is highly conserved across a broad range of retroviral envelope proteins. It is thought to participate in the formation of a labile disulfide bond possibly with the CX6CC motif present in the transmembrane protein.

Its subcellular location is the virion. It localises to the cell membrane. In terms of biological role, this endogenous retroviral envelope protein has retained its original fusogenic properties and participates in trophoblast fusion and the formation of a syncytium during placenta morphogenesis. The interaction with MFSD2A is apparently important for this process. Endogenous envelope proteins may have kept, lost or modified their original function during evolution but this one can still make pseudotypes with MLV, HIV-1 or SIV-1 virions and confer infectivity. Retroviral envelope proteins mediate receptor recognition and membrane fusion during early infection. The surface protein mediates receptor recognition, while the transmembrane protein anchors the envelope heterodimer to the viral membrane through one transmembrane domain. The other hydrophobic domain, called fusion peptide, mediates fusion of the viral membrane with the target cell membrane. The chain is Syncytin-2 (ERVFRD-1) from Callithrix jacchus (White-tufted-ear marmoset).